Consider the following 108-residue polypeptide: CRISPR-associated endoribonuclease Cas2 (108 aa).

Aspartate 15 serves as a coordination point for Mg(2+).

Belongs to the CRISPR-associated endoribonuclease Cas2 protein family. In terms of assembly, homodimer, forms a heterotetramer with a Cas1 homodimer. Requires Mg(2+) as cofactor.

In terms of biological role, CRISPR (clustered regularly interspaced short palindromic repeat), is an adaptive immune system that provides protection against mobile genetic elements (viruses, transposable elements and conjugative plasmids). CRISPR clusters contain sequences complementary to antecedent mobile elements and target invading nucleic acids. CRISPR clusters are transcribed and processed into CRISPR RNA (crRNA). Functions as a ssRNA-specific endoribonuclease. Involved in the integration of spacer DNA into the CRISPR cassette. This chain is CRISPR-associated endoribonuclease Cas2, found in Paracidovorax avenae (strain ATCC 19860 / DSM 7227 / CCUG 15838 / JCM 20985 / LMG 2117 / NCPPB 1011) (Acidovorax avenae).